The chain runs to 169 residues: Der GTPase-activating protein YihI (169 aa).

2 disordered regions span residues 1 to 98 (MKPS…PQAE) and 144 to 169 (GLSY…LRGN). The span at 10 to 19 (SKGHAKARRK) shows a compositional bias: basic residues. Residues 20–30 (TREELDQEARD) show a composition bias toward basic and acidic residues. Residues 31–40 (RKRLKKRRGH) show a composition bias toward basic residues. Residues 49 to 58 (GNTTSGSKGQ) show a composition bias toward polar residues. Residues 147–159 (YDDDEEEEEDEKQ) are compositionally biased toward acidic residues. Residues 160-169 (EDMMRLLRGN) are compositionally biased toward basic and acidic residues.

Belongs to the YihI family. In terms of assembly, interacts with Der.

Its function is as follows. A GTPase-activating protein (GAP) that modifies Der/EngA GTPase function. May play a role in ribosome biogenesis. In Escherichia coli O6:K15:H31 (strain 536 / UPEC), this protein is Der GTPase-activating protein YihI.